We begin with the raw amino-acid sequence, 118 residues long: Large ribosomal subunit protein bL20 (118 aa).

It belongs to the bacterial ribosomal protein bL20 family.

Functionally, binds directly to 23S ribosomal RNA and is necessary for the in vitro assembly process of the 50S ribosomal subunit. It is not involved in the protein synthesizing functions of that subunit. This is Large ribosomal subunit protein bL20 from Buchnera aphidicola subsp. Acyrthosiphon pisum (strain 5A).